The sequence spans 178 residues: MDHAEQGPDRPGVDDPGRGRRIGIDVGSVRIGVASSDPDGILATPVETVPRSKDRGPDAPDIRRIADIVEEYEAVEVIVGLPQTLRGERGKAASIATVFAKRLRRKVDPIPVRMADERLTTVTAARALRESGVSARGQRPVIDQAAAVAILQGWLDERSRSVNAGDVGGDVQLPEAGQ.

2 stretches are compositionally biased toward basic and acidic residues: residues 1 to 18 (MDHA…DPGR) and 50 to 60 (PRSKDRGPDAP). Disordered stretches follow at residues 1–23 (MDHA…RRIG) and 36–60 (SDPD…PDAP).

It belongs to the YqgF nuclease family.

It localises to the cytoplasm. Could be a nuclease involved in processing of the 5'-end of pre-16S rRNA. The chain is Putative pre-16S rRNA nuclease from Rhodococcus opacus (strain B4).